We begin with the raw amino-acid sequence, 335 residues long: N-acetylglucosaminyl-phosphatidylinositol de-N-acetylase (335 aa).

The chain crosses the membrane as a helical span at residues 3 to 23; the sequence is SAFTFLSLAIFPLALFIFWTL. 2 N-linked (GlcNAc...) asparagine glycosylation sites follow: Asn-128 and Asn-153.

Belongs to the PIGL family.

The protein resides in the endoplasmic reticulum membrane. The enzyme catalyses a 6-(N-acetyl-alpha-D-glucosaminyl)-1-(1,2-diacyl-sn-glycero-3-phospho)-1D-myo-inositol + H2O = a 6-(alpha-D-glucosaminyl)-1-(1,2-diacyl-sn-glycero-3-phospho)-1D-myo-inositol + acetate. Its pathway is glycolipid biosynthesis; glycosylphosphatidylinositol-anchor biosynthesis. In terms of biological role, involved in the second step of GPI biosynthesis. De-N-acetylation of N-acetylglucosaminyl-phosphatidylinositol. This is N-acetylglucosaminyl-phosphatidylinositol de-N-acetylase from Arthroderma benhamiae (strain ATCC MYA-4681 / CBS 112371) (Trichophyton mentagrophytes).